Here is a 385-residue protein sequence, read N- to C-terminus: 1-deoxy-D-xylulose 5-phosphate reductoisomerase (385 aa).

Positions 10, 11, 12, 13, 37, and 124 each coordinate NADPH. Lysine 125 is a 1-deoxy-D-xylulose 5-phosphate binding site. Residue glutamate 126 coordinates NADPH. Residue aspartate 150 coordinates Mn(2+). Positions 151, 152, 176, and 199 each coordinate 1-deoxy-D-xylulose 5-phosphate. Glutamate 152 is a Mn(2+) binding site. Residue glycine 205 coordinates NADPH. Residues serine 212, asparagine 217, lysine 218, and glutamate 221 each contribute to the 1-deoxy-D-xylulose 5-phosphate site. Glutamate 221 contributes to the Mn(2+) binding site.

The protein belongs to the DXR family. The cofactor is Mg(2+). It depends on Mn(2+) as a cofactor.

The enzyme catalyses 2-C-methyl-D-erythritol 4-phosphate + NADP(+) = 1-deoxy-D-xylulose 5-phosphate + NADPH + H(+). The protein operates within isoprenoid biosynthesis; isopentenyl diphosphate biosynthesis via DXP pathway; isopentenyl diphosphate from 1-deoxy-D-xylulose 5-phosphate: step 1/6. Functionally, catalyzes the NADPH-dependent rearrangement and reduction of 1-deoxy-D-xylulose-5-phosphate (DXP) to 2-C-methyl-D-erythritol 4-phosphate (MEP). The polypeptide is 1-deoxy-D-xylulose 5-phosphate reductoisomerase (Clostridium botulinum (strain Okra / Type B1)).